The sequence spans 238 residues: Riboflavin synthase (238 aa).

Lumazine-binding repeat units lie at residues 1 to 103 (MFTG…FGGH) and 104 to 205 (YVQG…EKQI). 2,4-dihydroxypteridine is bound by residues 4–6 (GIV), 54–56 (CLT), and 68–73 (GISPET). At serine 95 the chain carries Phosphoserine. Residues 107-109 (GHV), lysine 143, 152-154 (SLT), and 170-175 (SMIKHT) contribute to the 2,4-dihydroxypteridine site.

As to quaternary structure, homotrimer.

The catalysed reaction is 2 6,7-dimethyl-8-(1-D-ribityl)lumazine + H(+) = 5-amino-6-(D-ribitylamino)uracil + riboflavin. It functions in the pathway cofactor biosynthesis; riboflavin biosynthesis; riboflavin from 2-hydroxy-3-oxobutyl phosphate and 5-amino-6-(D-ribitylamino)uracil: step 2/2. Its function is as follows. Catalyzes the dismutation of two molecules of 6,7-dimethyl-8-ribityllumazine, resulting in the formation of riboflavin and 5-amino-6-(D-ribitylamino)uracil. The chain is Riboflavin synthase from Saccharomyces cerevisiae (strain ATCC 204508 / S288c) (Baker's yeast).